Consider the following 73-residue polypeptide: Nodulin-1 (73 aa).

The signal sequence occupies residues 1 to 23; sequence MERKTLASLCFFLIVLLAAQVVA. 3 disulfides stabilise this stretch: cysteine 39–cysteine 64, cysteine 49–cysteine 71, and cysteine 53–cysteine 73.

Expressed in nodules, but not in leaves, stems, flowers and roots. In developing nodules, expressed close to the infection threads.

The protein localises to the secreted. Its function is as follows. Nodulation-related protein probably involved in the infection process. In Medicago truncatula (Barrel medic), this protein is Nodulin-1 (N1).